The chain runs to 258 residues: Phosphate import ATP-binding protein PstB (258 aa).

An ABC transporter domain is found at 12–253 (IQVHNLNFYY…PKMKQTEDYI (242 aa)). ATP is bound at residue 44–51 (GPSGCGKS).

This sequence belongs to the ABC transporter superfamily. Phosphate importer (TC 3.A.1.7) family. As to quaternary structure, the complex is composed of two ATP-binding proteins (PstB), two transmembrane proteins (PstC and PstA) and a solute-binding protein (PstS).

The protein localises to the cell inner membrane. The catalysed reaction is phosphate(out) + ATP + H2O = ADP + 2 phosphate(in) + H(+). Functionally, part of the ABC transporter complex PstSACB involved in phosphate import. Responsible for energy coupling to the transport system. The polypeptide is Phosphate import ATP-binding protein PstB (Photorhabdus laumondii subsp. laumondii (strain DSM 15139 / CIP 105565 / TT01) (Photorhabdus luminescens subsp. laumondii)).